Here is a 346-residue protein sequence, read N- to C-terminus: Serine/threonine-protein phosphatase PP1(4.8) (346 aa).

Residues 46–65 form a disordered region; the sequence is QSAQTQESTPKTNGTGRATT. Residues Asp102, His104, Asp130, and Asn162 each contribute to the Mn(2+) site. The Proton donor role is filled by His163. Residues His211 and His287 each contribute to the Mn(2+) site.

The protein belongs to the PPP phosphatase family. PP-1 subfamily. It depends on Mn(2+) as a cofactor.

It carries out the reaction O-phospho-L-seryl-[protein] + H2O = L-seryl-[protein] + phosphate. The enzyme catalyses O-phospho-L-threonyl-[protein] + H2O = L-threonyl-[protein] + phosphate. This chain is Serine/threonine-protein phosphatase PP1(4.8), found in Trypanosoma brucei brucei.